We begin with the raw amino-acid sequence, 784 residues long: LPS-assembly protein LptD (784 aa).

The signal sequence occupies residues 1-24 (MKKRIPTLLATMIASALYSHQGLA). 2 disulfide bridges follow: Cys31–Cys724 and Cys173–Cys725.

It belongs to the LptD family. As to quaternary structure, component of the lipopolysaccharide transport and assembly complex. Interacts with LptE and LptA. Post-translationally, contains two intramolecular disulfide bonds.

The protein localises to the cell outer membrane. In terms of biological role, together with LptE, is involved in the assembly of lipopolysaccharide (LPS) at the surface of the outer membrane. In Salmonella paratyphi A (strain ATCC 9150 / SARB42), this protein is LPS-assembly protein LptD.